We begin with the raw amino-acid sequence, 362 residues long: MKLKLVAVAVTSLLAAGVVNAAEVYNKDGNKLDLYGKVHAQHYFSDDNGSDGDKTYARLGFKGETQINDQLTGFGQWEYEFKGNRTESQGADKDKTRLAFAGLKFADYGSFDYGRNYGVAYDIGAWTDVLPEFGGDTWTQTDVFMTGRTTGVATYRNTDFFGLVEGLNFAAQYQGKNDRDGAYESNGDGFGLSATYEYEGFGVGAAYAKSDRTNNQVKAASNLNAAGKNAEVWAAGLKYDANNIYLATTYSETLNMTTFGEDAAGDAFIANKTQNFEAVAQYQFDFGLRPSIAYLKSKGKNLGTYGDQDLVEYIDVGATYYFNKNMSTFVDYKINLLDDSDFTKAAKVSTDNIVAVGLNYQF.

Residues 1-21 form the signal peptide; sequence MKLKLVAVAVTSLLAAGVVNA.

It belongs to the Gram-negative porin family. As to quaternary structure, homotrimer.

It localises to the cell outer membrane. Forms pores that allow passive diffusion of small molecules across the outer membrane. In Salmonella choleraesuis (strain SC-B67), this protein is Outer membrane porin protein OmpD (ompD).